A 416-amino-acid chain; its full sequence is Phosphoglycerate kinase (416 aa).

Substrate-binding positions include 24 to 26 (DLN), arginine 40, 63 to 66 (HLGR), arginine 122, and arginine 162. ATP contacts are provided by residues lysine 212, glycine 300, glutamate 331, and 360 to 363 (GGDS).

Belongs to the phosphoglycerate kinase family. In terms of assembly, monomer.

The protein localises to the cytoplasm. The enzyme catalyses (2R)-3-phosphoglycerate + ATP = (2R)-3-phospho-glyceroyl phosphate + ADP. It functions in the pathway carbohydrate degradation; glycolysis; pyruvate from D-glyceraldehyde 3-phosphate: step 2/5. This Mycobacterium ulcerans (strain Agy99) protein is Phosphoglycerate kinase.